We begin with the raw amino-acid sequence, 1079 residues long: DNA-directed RNA polymerase subunit beta (1079 aa).

A disordered region spans residues 963 to 982 (RSTGPYSRVTQQPVKGRARR). The span at 966–975 (GPYSRVTQQP) shows a compositional bias: polar residues.

It belongs to the RNA polymerase beta chain family. In plastids the minimal PEP RNA polymerase catalytic core is composed of four subunits: alpha, beta, beta', and beta''. When a (nuclear-encoded) sigma factor is associated with the core the holoenzyme is formed, which can initiate transcription.

It localises to the plastid. The protein resides in the chloroplast. The catalysed reaction is RNA(n) + a ribonucleoside 5'-triphosphate = RNA(n+1) + diphosphate. Functionally, DNA-dependent RNA polymerase catalyzes the transcription of DNA into RNA using the four ribonucleoside triphosphates as substrates. The sequence is that of DNA-directed RNA polymerase subunit beta from Pelargonium hortorum (Common geranium).